Consider the following 460-residue polypeptide: Hydroxyproline dehydrogenase (460 aa).

At Lys310 the chain carries N6-acetyllysine.

Belongs to the proline oxidase family. Requires FAD as cofactor.

The catalysed reaction is trans-4-hydroxy-L-proline + a quinone = (3R,5S)-1-pyrroline-3-hydroxy-5-carboxylate + a quinol + H(+). It carries out the reaction L-proline + a quinone = (S)-1-pyrroline-5-carboxylate + a quinol + H(+). Its activity is regulated as follows. Hydroproxyproline dehydrogenase activity is inhibited by THFA,(1R,3R)3-OH-cyclopentane-COOH and 5-OH-1H-pyrazole-3-COOH. In terms of biological role, dehydrogenase that converts trans-4-L-hydroxyproline to delta-1-pyrroline-3-hydroxy-5-carboxylate (Hyp) using ubiquinone-10 as the terminal electron acceptor. Can also use proline as a substrate but with a very much lower efficiency. Does not react with other diastereomers of Hyp: trans-4-D-hydroxyproline and cis-4-L-hydroxyproline. Ubiquininone analogs such as menadione, duroquinone and ubiquinone-1 react more efficiently than oxygen as the terminal electron acceptor during catalysis. The polypeptide is Hydroxyproline dehydrogenase (Homo sapiens (Human)).